Reading from the N-terminus, the 200-residue chain is Membrane-spanning 4-domains subfamily A member 5 (200 aa).

At 1–52 (MDSSTAHSPVFLVFPPEITASEYESTELSATTFSTQSPLQKLFARKMKILGT) the chain is on the cytoplasmic side. A helical transmembrane segment spans residues 53 to 73 (IQILFGIMTFSFGVIFLFTLL). The Extracellular segment spans residues 74 to 80 (KPYPRFP). The chain crosses the membrane as a helical span at residues 81–101 (FIFLSGYPFWGSVLFINSGAF). The Cytoplasmic portion of the chain corresponds to 102-120 (LIAVKRKTTETLIILSRIM). The chain crosses the membrane as a helical span at residues 121-141 (NFLSALGAIAGIILLTFGFIL). Topologically, residues 142-159 (DQNYICGYSHQNSQCKAV) are extracellular. A helical transmembrane segment spans residues 160–180 (TVLFLGILITLMTFSIIELFI). The Cytoplasmic segment spans residues 181–200 (SLPFSILGCHSEDCDCEQCC).

The protein belongs to the MS4A family. Expressed at high level in the testis. Detected also in the pancreas, heart and in the brain.

It localises to the membrane. Functionally, may be involved in signal transduction as a component of a multimeric receptor complex. The sequence is that of Membrane-spanning 4-domains subfamily A member 5 (MS4A5) from Homo sapiens (Human).